Consider the following 459-residue polypeptide: Ribulose bisphosphate carboxylase large chain (459 aa).

At lysine 4 the chain carries N6,N6,N6-trimethyllysine. Asparagine 113 and threonine 163 together coordinate substrate. Lysine 165 serves as the catalytic Proton acceptor. Residue lysine 167 participates in substrate binding. Mg(2+) is bound by residues lysine 191, aspartate 193, and glutamate 194. An N6-carboxylysine modification is found at lysine 191. Histidine 284 serves as the catalytic Proton acceptor. Substrate contacts are provided by arginine 285, histidine 317, and serine 369.

This sequence belongs to the RuBisCO large chain family. Type I subfamily. In terms of assembly, heterohexadecamer of 8 large chains and 8 small chains; disulfide-linked. The disulfide link is formed within the large subunit homodimers. Requires Mg(2+) as cofactor. The disulfide bond which can form in the large chain dimeric partners within the hexadecamer appears to be associated with oxidative stress and protein turnover.

The protein localises to the plastid. It localises to the chloroplast. The catalysed reaction is 2 (2R)-3-phosphoglycerate + 2 H(+) = D-ribulose 1,5-bisphosphate + CO2 + H2O. It catalyses the reaction D-ribulose 1,5-bisphosphate + O2 = 2-phosphoglycolate + (2R)-3-phosphoglycerate + 2 H(+). Functionally, ruBisCO catalyzes two reactions: the carboxylation of D-ribulose 1,5-bisphosphate, the primary event in carbon dioxide fixation, as well as the oxidative fragmentation of the pentose substrate in the photorespiration process. Both reactions occur simultaneously and in competition at the same active site. This chain is Ribulose bisphosphate carboxylase large chain, found in Nypa fruticans (Nypa palm).